The primary structure comprises 419 residues: Imidazolonepropionase (419 aa).

Fe(3+) is bound by residues His-87 and His-89. Zn(2+) contacts are provided by His-87 and His-89. Positions 96, 159, and 192 each coordinate 4-imidazolone-5-propanoate. Tyr-159 contacts N-formimidoyl-L-glutamate. A Fe(3+)-binding site is contributed by His-257. Zn(2+) is bound at residue His-257. Residue Gln-260 coordinates 4-imidazolone-5-propanoate. Position 332 (Asp-332) interacts with Fe(3+). Asp-332 is a Zn(2+) binding site. Positions 334 and 336 each coordinate N-formimidoyl-L-glutamate. Ser-337 is a binding site for 4-imidazolone-5-propanoate.

The protein belongs to the metallo-dependent hydrolases superfamily. HutI family. Zn(2+) is required as a cofactor. Fe(3+) serves as cofactor.

It is found in the cytoplasm. It carries out the reaction 4-imidazolone-5-propanoate + H2O = N-formimidoyl-L-glutamate. It functions in the pathway amino-acid degradation; L-histidine degradation into L-glutamate; N-formimidoyl-L-glutamate from L-histidine: step 3/3. Functionally, catalyzes the hydrolytic cleavage of the carbon-nitrogen bond in imidazolone-5-propanoate to yield N-formimidoyl-L-glutamate. It is the third step in the universal histidine degradation pathway. The polypeptide is Imidazolonepropionase (Alteromonas mediterranea (strain DSM 17117 / CIP 110805 / LMG 28347 / Deep ecotype)).